The chain runs to 276 residues: MAVRKLKPTSPGRRFQTVSSFEEITRSTPERSLTEGLTKKSGRNCYGRVTSRRRGGGHKRLYRIIDFRRDKVGVPAKVAHVEYDPNRSARIALLHYSDGEKRYILAPLGVKQGDVVVAGDSVDIKPGNAMALSRVPVGTIVHNIELYPGKGGQFCRAAGTYAQLVAKEGNYALLRMPSGEVRKVLVTCCATIGQVGNLDHEKISYGKAGRSRWLGRRPKVRGVAMNPIDHPLGGGEGRSSGGRHPVTPWGIPTKGFKTRDKKKASSKLIIKRRGQK.

2 disordered regions span residues 26–45 (RSTPERSLTEGLTKKSGRNC) and 224–276 (AMNP…RGQK). A compositionally biased stretch (basic residues) spans 259–276 (RDKKKASSKLIIKRRGQK).

This sequence belongs to the universal ribosomal protein uL2 family. Part of the 50S ribosomal subunit. Forms a bridge to the 30S subunit in the 70S ribosome.

One of the primary rRNA binding proteins. Required for association of the 30S and 50S subunits to form the 70S ribosome, for tRNA binding and peptide bond formation. It has been suggested to have peptidyltransferase activity; this is somewhat controversial. Makes several contacts with the 16S rRNA in the 70S ribosome. In Oleidesulfovibrio alaskensis (strain ATCC BAA-1058 / DSM 17464 / G20) (Desulfovibrio alaskensis), this protein is Large ribosomal subunit protein uL2.